A 66-amino-acid polypeptide reads, in one-letter code: Small vasohibin-binding protein (66 aa).

Positions 1–23 are enriched in basic and acidic residues; sequence MDPPARKEKSKVKEPAFRVEKAK. A disordered region spans residues 1-30; it reads MDPPARKEKSKVKEPAFRVEKAKQKSAQQE. A coiled-coil region spans residues 5 to 52; the sequence is ARKEKSKVKEPAFRVEKAKQKSAQQELKQRQRAEIYALNRVMTELEQQ.

The protein belongs to the SVBP family. In terms of assembly, interacts with VASH1 and VASH2. Highly expressed in bone marrow, spleen and testis.

The protein resides in the cytoplasm. It localises to the secreted. It is found in the cytoskeleton. Functionally, enhances the tyrosine carboxypeptidase activity of VASH1 and VASH2, thereby promoting the removal of the C-terminal tyrosine residue of alpha-tubulin. Also required to enhance the solubility and secretion of VASH1 and VASH2. Plays a role in axon and excitatory synapse formation. This chain is Small vasohibin-binding protein, found in Mus musculus (Mouse).